We begin with the raw amino-acid sequence, 131 residues long: Capsid protein (131 aa).

Ca(2+)-binding residues include glutamine 2 and tyrosine 131.

Belongs to the Leviviricetes capsid protein family. In terms of assembly, homodimer. The capsid proteins form dimers that assemble by group of 5. Twelve such pentamers are linked together with free dimers. The homodimers binds to the viral RNA via an operator hairpin, but also to many other RNA sequences in the viral genome; this interaction probably shifts the virus from the replicative to the assembly phase and ensures specific encapsidation of the viral genome.

It localises to the virion. Functionally, capsid protein self-assembles to form an icosahedral capsid with a T=3 symmetry, about 26 nm in diameter, and consisting of 89 capsid proteins dimers (178 capsid proteins). Involved in viral genome encapsidation through the interaction between a capsid protein dimer and the multiple packaging signals present in the RNA genome. The capsid also contains 1 copy of the A2 maturation protein. In terms of biological role, acts as a translational repressor of viral replicase synthesis late in infection. This latter function is the result of capsid protein interaction with an RNA hairpin which contains the replicase ribosome-binding site. In Pseudomonas phage PRR1 (Bacteriophage PRR1), this protein is Capsid protein.